We begin with the raw amino-acid sequence, 418 residues long: STE20-related kinase adapter protein beta (418 aa).

The 312-residue stretch at 58-369 folds into the Protein kinase domain; sequence YELQVEIGRG…ASSLLSHVFF (312 aa). Residues 64-72 and Lys89 each bind ATP; that span reads IGRGFDNLT.

The protein belongs to the protein kinase superfamily. STE Ser/Thr protein kinase family. STE20 subfamily. In terms of assembly, component of a trimeric complex composed of STK11/LKB1, STRAD (STRADA or STRADB) and CAB39/MO25 (CAB39/MO25alpha or CAB39L/MO25beta): the complex tethers STK11/LKB1 in the cytoplasm and stimulates its catalytic activity. Interacts with BIRC4/XIAP. These two proteins are likely to coexist in a complex with TAK1, TRAF6, TAB1 and TAB2. As to expression, highly expressed in heart, skeletal muscle, testis, liver and colon.

It is found in the nucleus. It localises to the cytoplasm. In terms of biological role, pseudokinase which, in complex with CAB39/MO25 (CAB39/MO25alpha or CAB39L/MO25beta), binds to and activates STK11/LKB1. Adopts a closed conformation typical of active protein kinases and binds STK11/LKB1 as a pseudosubstrate, promoting conformational change of STK11/LKB1 in an active conformation. The sequence is that of STE20-related kinase adapter protein beta (STRADB) from Homo sapiens (Human).